A 297-amino-acid polypeptide reads, in one-letter code: Protoheme IX farnesyltransferase (297 aa).

The next 8 helical transmembrane spans lie at 15–35 (VVAL…PAPY), 39–59 (GLLV…AAVF), 91–111 (VWGV…VNII), 112–132 (TVVL…LYLK), 139–159 (IVIG…AVSG), 166–186 (ACLL…ALAI), 220–240 (LLLV…YLVI), and 265–285 (AWST…ALLF).

Belongs to the UbiA prenyltransferase family. Protoheme IX farnesyltransferase subfamily.

It localises to the cell inner membrane. It catalyses the reaction heme b + (2E,6E)-farnesyl diphosphate + H2O = Fe(II)-heme o + diphosphate. It functions in the pathway porphyrin-containing compound metabolism; heme O biosynthesis; heme O from protoheme: step 1/1. Functionally, converts heme B (protoheme IX) to heme O by substitution of the vinyl group on carbon 2 of heme B porphyrin ring with a hydroxyethyl farnesyl side group. In Vesicomyosocius okutanii subsp. Calyptogena okutanii (strain HA), this protein is Protoheme IX farnesyltransferase.